A 502-amino-acid polypeptide reads, in one-letter code: Cardiolipin synthase (502 aa).

The next 3 helical transmembrane spans lie at 7–27, 29–49, and 59–79; these read VAILVVIVGALLALTNGFWEG, LLGLFSVLMSCSVIFIALVIS, and IAWLAVLGSFPIVGFLFYLLF. PLD phosphodiesterase domains are found at residues 237–264 and 415–442; these read INFRNHRKIIVIDGGVGFVGGLNIGDEY and EKGFLHSKVIVVDGELASIGTANMDMRS. Catalysis depends on residues His-242, Lys-244, Asp-249, His-420, Lys-422, and Asp-427.

It belongs to the phospholipase D family. Cardiolipin synthase subfamily.

The protein localises to the cell membrane. It catalyses the reaction 2 a 1,2-diacyl-sn-glycero-3-phospho-(1'-sn-glycerol) = a cardiolipin + glycerol. Its function is as follows. Catalyzes the reversible phosphatidyl group transfer from one phosphatidylglycerol molecule to another to form cardiolipin (CL) (diphosphatidylglycerol) and glycerol. This is Cardiolipin synthase (cls) from Geobacillus kaustophilus (strain HTA426).